Here is a 148-residue protein sequence, read N- to C-terminus: Deoxyuridine 5'-triphosphate nucleotidohydrolase (148 aa).

Substrate contacts are provided by residues 67-69 (RSG), Asn-80, 84-86 (LID), and Met-94.

It belongs to the dUTPase family. The cofactor is Mg(2+).

The catalysed reaction is dUTP + H2O = dUMP + diphosphate + H(+). The protein operates within pyrimidine metabolism; dUMP biosynthesis; dUMP from dCTP (dUTP route): step 2/2. This enzyme is involved in nucleotide metabolism: it produces dUMP, the immediate precursor of thymidine nucleotides and it decreases the intracellular concentration of dUTP so that uracil cannot be incorporated into DNA. This is Deoxyuridine 5'-triphosphate nucleotidohydrolase from Francisella tularensis subsp. tularensis (strain FSC 198).